A 486-amino-acid chain; its full sequence is UDP-N-acetylmuramoyl-L-alanyl-D-glutamate--2,6-diaminopimelate ligase (486 aa).

Ser-33 contributes to the UDP-N-acetyl-alpha-D-muramoyl-L-alanyl-D-glutamate binding site. 110–116 (GTNGKTS) contributes to the ATP binding site. Residues 152–153 (TT), Ser-179, Gln-185, and Arg-187 contribute to the UDP-N-acetyl-alpha-D-muramoyl-L-alanyl-D-glutamate site. Lys-219 is subject to N6-carboxylysine. Meso-2,6-diaminopimelate is bound by residues Arg-383, 407 to 410 (DNPR), Gly-455, and Glu-459. Residues 407-410 (DNPR) carry the Meso-diaminopimelate recognition motif motif.

This sequence belongs to the MurCDEF family. MurE subfamily. It depends on Mg(2+) as a cofactor. In terms of processing, carboxylation is probably crucial for Mg(2+) binding and, consequently, for the gamma-phosphate positioning of ATP.

The protein resides in the cytoplasm. It carries out the reaction UDP-N-acetyl-alpha-D-muramoyl-L-alanyl-D-glutamate + meso-2,6-diaminopimelate + ATP = UDP-N-acetyl-alpha-D-muramoyl-L-alanyl-gamma-D-glutamyl-meso-2,6-diaminopimelate + ADP + phosphate + H(+). It functions in the pathway cell wall biogenesis; peptidoglycan biosynthesis. In terms of biological role, catalyzes the addition of meso-diaminopimelic acid to the nucleotide precursor UDP-N-acetylmuramoyl-L-alanyl-D-glutamate (UMAG) in the biosynthesis of bacterial cell-wall peptidoglycan. This Zymomonas mobilis subsp. mobilis (strain ATCC 31821 / ZM4 / CP4) protein is UDP-N-acetylmuramoyl-L-alanyl-D-glutamate--2,6-diaminopimelate ligase.